We begin with the raw amino-acid sequence, 129 residues long: Large ribosomal subunit protein bL17 (129 aa).

This sequence belongs to the bacterial ribosomal protein bL17 family. In terms of assembly, part of the 50S ribosomal subunit. Contacts protein L32.

In Serratia proteamaculans (strain 568), this protein is Large ribosomal subunit protein bL17.